A 394-amino-acid polypeptide reads, in one-letter code: Elongation factor Tu 2 (394 aa).

One can recognise a tr-type G domain in the interval 10-204; sequence KPHVNVGTIG…FLDSYIPEPE (195 aa). The tract at residues 19-26 is G1; sequence GHVDHGKT. 19–26 is a GTP binding site; it reads GHVDHGKT. Thr26 is a Mg(2+) binding site. The G2 stretch occupies residues 60 to 64; sequence GITIN. The segment at 81-84 is G3; sequence DCPG. Residues 81–85 and 136–139 contribute to the GTP site; these read DCPGH and NKCD. The segment at 136 to 139 is G4; sequence NKCD. A G5 region spans residues 174 to 176; sequence SAL.

The protein belongs to the TRAFAC class translation factor GTPase superfamily. Classic translation factor GTPase family. EF-Tu/EF-1A subfamily. As to quaternary structure, monomer.

The protein resides in the cytoplasm. The catalysed reaction is GTP + H2O = GDP + phosphate + H(+). Functionally, GTP hydrolase that promotes the GTP-dependent binding of aminoacyl-tRNA to the A-site of ribosomes during protein biosynthesis. This is Elongation factor Tu 2 from Shigella flexneri serotype 5b (strain 8401).